The chain runs to 165 residues: ATP synthase subunit b (165 aa).

A helical transmembrane segment spans residues 5–25 (LVGITWEFVFQIVNTFIIFLL).

This sequence belongs to the ATPase B chain family. As to quaternary structure, F-type ATPases have 2 components, F(1) - the catalytic core - and F(0) - the membrane proton channel. F(1) has five subunits: alpha(3), beta(3), gamma(1), delta(1), epsilon(1). F(0) has three main subunits: a(1), b(2) and c(10-14). The alpha and beta chains form an alternating ring which encloses part of the gamma chain. F(1) is attached to F(0) by a central stalk formed by the gamma and epsilon chains, while a peripheral stalk is formed by the delta and b chains.

The protein resides in the cell membrane. In terms of biological role, f(1)F(0) ATP synthase produces ATP from ADP in the presence of a proton or sodium gradient. F-type ATPases consist of two structural domains, F(1) containing the extramembraneous catalytic core and F(0) containing the membrane proton channel, linked together by a central stalk and a peripheral stalk. During catalysis, ATP synthesis in the catalytic domain of F(1) is coupled via a rotary mechanism of the central stalk subunits to proton translocation. Component of the F(0) channel, it forms part of the peripheral stalk, linking F(1) to F(0). The chain is ATP synthase subunit b from Clostridioides difficile (strain 630) (Peptoclostridium difficile).